Reading from the N-terminus, the 239-residue chain is Geranylgeranylglyceryl phosphate synthase (239 aa).

Mg(2+) contacts are provided by D18 and S45. Residues 166–172, 197–198, and 219–220 contribute to the sn-glycerol 1-phosphate site; these read YLEAGSG, GG, and GT.

It belongs to the GGGP/HepGP synthase family. Group II subfamily. It depends on Mg(2+) as a cofactor.

Its subcellular location is the cytoplasm. The enzyme catalyses sn-glycerol 1-phosphate + (2E,6E,10E)-geranylgeranyl diphosphate = sn-3-O-(geranylgeranyl)glycerol 1-phosphate + diphosphate. The protein operates within membrane lipid metabolism; glycerophospholipid metabolism. Functionally, prenyltransferase that catalyzes the transfer of the geranylgeranyl moiety of geranylgeranyl diphosphate (GGPP) to the C3 hydroxyl of sn-glycerol-1-phosphate (G1P). This reaction is the first ether-bond-formation step in the biosynthesis of archaeal membrane lipids. This is Geranylgeranylglyceryl phosphate synthase from Pyrobaculum islandicum (strain DSM 4184 / JCM 9189 / GEO3).